A 154-amino-acid polypeptide reads, in one-letter code: Aspartate carbamoyltransferase regulatory chain (154 aa).

4 residues coordinate Zn(2+): Cys-109, Cys-114, Cys-138, and Cys-141.

Belongs to the PyrI family. In terms of assembly, contains catalytic and regulatory chains. Zn(2+) is required as a cofactor.

In terms of biological role, involved in allosteric regulation of aspartate carbamoyltransferase. The sequence is that of Aspartate carbamoyltransferase regulatory chain from Photobacterium profundum (strain SS9).